Reading from the N-terminus, the 537-residue chain is Mitochondrial distribution and morphology protein 34 (537 aa).

Residues 1–195 enclose the SMP-LTD domain; sequence MAFNFNWSPL…LPAIIHRLSL (195 aa). Disordered regions lie at residues 320–339, 348–403, 421–493, and 516–537; these read YTFS…RPSL, GLSL…IMPH, GRSP…DTSS, and KNGN…YEAR. Residues 355–371 are compositionally biased toward basic residues; sequence RHSKAGRKKKTRVVNLR. Residues 378–391 are compositionally biased toward acidic residues; that stretch reads ANSEEEEDTPETDS. The span at 425 to 441 shows a compositional bias: polar residues; the sequence is DLQQQPRRPSFRAQATN.

This sequence belongs to the MDM34 family. Component of the ER-mitochondria encounter structure (ERMES) or MDM complex, composed of MMM1, MDM10, MDM12 and MDM34.

The protein localises to the mitochondrion outer membrane. Its function is as follows. Component of the ERMES/MDM complex, which serves as a molecular tether to connect the endoplasmic reticulum (ER) and mitochondria. Components of this complex are involved in the control of mitochondrial shape and protein biogenesis, and function in nonvesicular lipid trafficking between the ER and mitochondria. MDM34 is required for the interaction of the ER-resident membrane protein MMM1 and the outer mitochondrial membrane-resident beta-barrel protein MDM10. This is Mitochondrial distribution and morphology protein 34 from Chaetomium globosum (strain ATCC 6205 / CBS 148.51 / DSM 1962 / NBRC 6347 / NRRL 1970) (Soil fungus).